We begin with the raw amino-acid sequence, 268 residues long: Aliphatic sulfonates import ATP-binding protein SsuB 2 (268 aa).

Residues 16–230 enclose the ABC transporter domain; that stretch reads VQLRNVVRQF…DSGQAGFQSI (215 aa). 48 to 55 lines the ATP pocket; sequence GASGSGKT.

This sequence belongs to the ABC transporter superfamily. Aliphatic sulfonates importer (TC 3.A.1.17.2) family. As to quaternary structure, the complex is composed of two ATP-binding proteins (SsuB), two transmembrane proteins (SsuC) and a solute-binding protein (SsuA).

The protein localises to the cell inner membrane. The catalysed reaction is ATP + H2O + aliphatic sulfonate-[sulfonate-binding protein]Side 1 = ADP + phosphate + aliphatic sulfonateSide 2 + [sulfonate-binding protein]Side 1.. Functionally, part of the ABC transporter complex SsuABC involved in aliphatic sulfonates import. Responsible for energy coupling to the transport system. The protein is Aliphatic sulfonates import ATP-binding protein SsuB 2 of Pseudomonas savastanoi pv. phaseolicola (strain 1448A / Race 6) (Pseudomonas syringae pv. phaseolicola (strain 1448A / Race 6)).